A 382-amino-acid chain; its full sequence is G-box-binding factor 3 (382 aa).

The span at 1–16 (MGNSSEEPKPPTKSDK) shows a compositional bias: basic and acidic residues. Disordered stretches follow at residues 1 to 26 (MGNS…DQTN), 97 to 221 (MGSL…GVKL), and 257 to 285 (EREL…AETE). A compositionally biased stretch (polar residues) spans 111-130 (TPGTLLSIDTPTKSTGNTDN). Positions 155–165 (ADEHKRSRNSS) are enriched in basic and acidic residues. Residues 166-181 (ETDGSTDGSDGNTTGA) are compositionally biased toward low complexity. Positions 182-199 (DEPKLKRSREGTPTKDGK) are enriched in basic and acidic residues. Positions 202-216 (VQASSFHSVSPSSGD) are enriched in polar residues. The bZIP domain occupies 259-322 (ELKRERRKQS…DKLRGANATL (64 aa)). The segment at 261-280 (KRERRKQSNRESARRSRLRK) is basic motif. The tract at residues 287–322 (LARKVEALTAENMALRSELNQLNEKSDKLRGANATL) is leucine-zipper. Residues 329–382 (SEPEKRVPANMLSRVKNSGAGDKNKNQGDNDSNSTSKLHQLLDTKPRAKAVAAG) are disordered. The segment covering 357-366 (DNDSNSTSKL) has biased composition (polar residues).

Belongs to the bZIP family. DNA-binding heterodimer. Interacts with GBF4. Interacts with BZIP16 and BZIP68. As to expression, present only in dark grown leaves and roots.

It localises to the nucleus. In terms of biological role, binds to the G-box motif (5'-CCACGTGG-3') of the rbcS-1A gene promoter. G-box and G-box-like motifs are cis-acting elements defined in promoters of certain plant genes which are regulated by such diverse stimuli as light-induction or hormone control. This is G-box-binding factor 3 (GBF3) from Arabidopsis thaliana (Mouse-ear cress).